The sequence spans 349 residues: tRNA pseudouridine synthase D (349 aa).

Substrate is bound at residue phenylalanine 26. Catalysis depends on aspartate 79, which acts as the Nucleophile. Asparagine 128 is a substrate binding site. Residues 154-302 (GVPNYFGSQR…VEGSRRAVLL (149 aa)) enclose the TRUD domain. Phenylalanine 328 is a substrate binding site.

It belongs to the pseudouridine synthase TruD family.

It carries out the reaction uridine(13) in tRNA = pseudouridine(13) in tRNA. Its function is as follows. Responsible for synthesis of pseudouridine from uracil-13 in transfer RNAs. The chain is tRNA pseudouridine synthase D from Yersinia pseudotuberculosis serotype O:1b (strain IP 31758).